Consider the following 598-residue polypeptide: 2-succinyl-5-enolpyruvyl-6-hydroxy-3-cyclohexene-1-carboxylate synthase (598 aa).

Belongs to the TPP enzyme family. MenD subfamily. Homodimer. Mg(2+) serves as cofactor. Requires Mn(2+) as cofactor. Thiamine diphosphate is required as a cofactor.

The catalysed reaction is isochorismate + 2-oxoglutarate + H(+) = 5-enolpyruvoyl-6-hydroxy-2-succinyl-cyclohex-3-ene-1-carboxylate + CO2. It participates in quinol/quinone metabolism; 1,4-dihydroxy-2-naphthoate biosynthesis; 1,4-dihydroxy-2-naphthoate from chorismate: step 2/7. Its pathway is cofactor biosynthesis; phylloquinone biosynthesis. Its function is as follows. Catalyzes the thiamine diphosphate-dependent decarboxylation of 2-oxoglutarate and the subsequent addition of the resulting succinic semialdehyde-thiamine pyrophosphate anion to isochorismate to yield 2-succinyl-5-enolpyruvyl-6-hydroxy-3-cyclohexene-1-carboxylate (SEPHCHC). This Prochlorococcus marinus (strain NATL2A) protein is 2-succinyl-5-enolpyruvyl-6-hydroxy-3-cyclohexene-1-carboxylate synthase.